A 298-amino-acid polypeptide reads, in one-letter code: Ethylmalonyl-CoA decarboxylase (298 aa).

It belongs to the enoyl-CoA hydratase/isomerase family.

It is found in the cytoplasm. The protein resides in the cytosol. The enzyme catalyses (2S)-ethylmalonyl-CoA + H(+) = butanoyl-CoA + CO2. It catalyses the reaction (S)-methylmalonyl-CoA + H(+) = propanoyl-CoA + CO2. It carries out the reaction (2R)-ethylmalonyl-CoA + H(+) = butanoyl-CoA + CO2. Its function is as follows. Decarboxylates ethylmalonyl-CoA, a potentially toxic metabolite, to form butyryl-CoA, suggesting it might be involved in metabolite proofreading. Acts preferentially on (S)-ethylmalonyl-CoA but also has some activity on the (R)-isomer. Also has methylmalonyl-CoA decarboxylase activity at lower level. The chain is Ethylmalonyl-CoA decarboxylase (ECHDC1) from Gallus gallus (Chicken).